The chain runs to 678 residues: Glycine--tRNA ligase beta subunit (678 aa).

It belongs to the class-II aminoacyl-tRNA synthetase family. As to quaternary structure, tetramer of two alpha and two beta subunits.

The protein resides in the cytoplasm. It catalyses the reaction tRNA(Gly) + glycine + ATP = glycyl-tRNA(Gly) + AMP + diphosphate. This chain is Glycine--tRNA ligase beta subunit, found in Streptococcus pneumoniae (strain ATCC BAA-255 / R6).